The primary structure comprises 204 residues: Thymidylate kinase (204 aa).

Gly11–Thr18 serves as a coordination point for ATP.

This sequence belongs to the thymidylate kinase family.

The catalysed reaction is dTMP + ATP = dTDP + ADP. The protein operates within pyrimidine metabolism; dTTP biosynthesis. The protein is Thymidylate kinase (TMK) of Camelus.